We begin with the raw amino-acid sequence, 447 residues long: tRNA-2-methylthio-N(6)-dimethylallyladenosine synthase (447 aa).

The 118-residue stretch at 3–120 folds into the MTTase N-terminal domain; the sequence is KKLYIETHGC…LPEMIDAART (118 aa). [4Fe-4S] cluster-binding residues include Cys12, Cys49, Cys83, Cys157, Cys161, and Cys164. Positions 143–375 constitute a Radical SAM core domain; sequence RVDGPSAFVS…QHRINQYGFE (233 aa). Residues 378 to 442 form the TRAM domain; the sequence is RRMVGTVQRI…PHSLRGTLLD (65 aa).

This sequence belongs to the methylthiotransferase family. MiaB subfamily. Monomer. It depends on [4Fe-4S] cluster as a cofactor.

Its subcellular location is the cytoplasm. It catalyses the reaction N(6)-dimethylallyladenosine(37) in tRNA + (sulfur carrier)-SH + AH2 + 2 S-adenosyl-L-methionine = 2-methylsulfanyl-N(6)-dimethylallyladenosine(37) in tRNA + (sulfur carrier)-H + 5'-deoxyadenosine + L-methionine + A + S-adenosyl-L-homocysteine + 2 H(+). Its function is as follows. Catalyzes the methylthiolation of N6-(dimethylallyl)adenosine (i(6)A), leading to the formation of 2-methylthio-N6-(dimethylallyl)adenosine (ms(2)i(6)A) at position 37 in tRNAs that read codons beginning with uridine. The sequence is that of tRNA-2-methylthio-N(6)-dimethylallyladenosine synthase from Ectopseudomonas mendocina (strain ymp) (Pseudomonas mendocina).